A 354-amino-acid polypeptide reads, in one-letter code: DNA polymerase IV (354 aa).

Positions 6-187 constitute a UmuC domain; the sequence is IIHIDCDCFY…LPVTKLHGVG (182 aa). Aspartate 10 and aspartate 105 together coordinate Mg(2+). Glutamate 106 is an active-site residue.

It belongs to the DNA polymerase type-Y family. In terms of assembly, monomer. Mg(2+) serves as cofactor.

Its subcellular location is the cytoplasm. The catalysed reaction is DNA(n) + a 2'-deoxyribonucleoside 5'-triphosphate = DNA(n+1) + diphosphate. Its function is as follows. Poorly processive, error-prone DNA polymerase involved in untargeted mutagenesis. Copies undamaged DNA at stalled replication forks, which arise in vivo from mismatched or misaligned primer ends. These misaligned primers can be extended by PolIV. Exhibits no 3'-5' exonuclease (proofreading) activity. May be involved in translesional synthesis, in conjunction with the beta clamp from PolIII. The protein is DNA polymerase IV of Pseudomonas syringae pv. syringae (strain B728a).